The chain runs to 362 residues: Myricetin 3'-O-methyltransferase 4 (362 aa).

Aspartate 229 contributes to the S-adenosyl-L-methionine binding site. Histidine 267 acts as the Proton acceptor in catalysis.

Belongs to the class I-like SAM-binding methyltransferase superfamily. Cation-independent O-methyltransferase family. As to quaternary structure, homodimer. In terms of tissue distribution, mainly expressed in stem and petiole trichomes.

It carries out the reaction myricetin + S-adenosyl-L-methionine = laricitrin + S-adenosyl-L-homocysteine + H(+). Its pathway is flavonoid metabolism. Functionally, flavonoid 3'-O-methyltransferase involved in the biosynthesis of polymethoxylated flavonoids natural products such as myricetin derivatives, aroma compounds possessing antioxidant properties and exhibiting pharmacological activities such as anti-carcinogen, anti-viral, anti-thrombotic, anti-diabetic, anti-atherosclerotic, and anti-inflammatory effects. Catalyzes S-adenosylmethionine-dependent regioselective 3'-O-methylation of flavonoids; active on various hydroxylated flavonoid substrates, including myricetin, thus producing 3'-methyl myricetin (laricitrin). This is Myricetin 3'-O-methyltransferase 4 from Solanum lycopersicum (Tomato).